Here is a 501-residue protein sequence, read N- to C-terminus: uncharacterized protein (501 aa).

7 helical membrane-spanning segments follow: residues 14-34 (AIFIIPFWILSIALWFSSGSV), 73-93 (FILFQIIPINILCFLPLLGYM), 111-131 (IFGIMMLITIPLFLIVSICIF), 197-217 (FIIATIVFSFSMLVIVLVLLI), 274-294 (ILLSIFQLFYIGSYFSLYYFG), 297-317 (FNLIPFFINLIILFISYYNLI), and 466-486 (FLVLIGLSGLFNILYLKRLIL).

The protein resides in the membrane. This is an uncharacterized protein from Dictyostelium discoideum (Social amoeba).